We begin with the raw amino-acid sequence, 557 residues long: Hepatocyte nuclear factor 1-beta (557 aa).

The segment at 1-31 (MVSKLTSLQQELLSALLSSGVTKEVLVQALE) is dimerization. Residues 1-32 (MVSKLTSLQQELLSALLSSGVTKEVLVQALEE) enclose the HNF-p1 domain. A phosphoserine mark is found at serine 49, serine 52, serine 75, and serine 80. Positions 64–85 (TLTNGHAKGRLSGDEGSEDGDD) are disordered. In terms of domain architecture, POU-specific atypical spans 93–188 (KELQALNTEE…ILRQFNQTVQ (96 aa)). Residues 231 to 311 (MRRNRFKWGP…NRRKEEAFRQ (81 aa)) constitute a DNA-binding region (homeobox; HNF1-type). The interval 324–370 (HSLNPLLSHGSPHHQPSSSPPNKLSGVRYSQQGNNEVTSSSTISHHG) is disordered. The span at 328–344 (PLLSHGSPHHQPSSSPP) shows a compositional bias: low complexity. Positions 351–370 (RYSQQGNNEVTSSSTISHHG) are enriched in polar residues.

Belongs to the HNF1 homeobox family. In terms of assembly, binds DNA as a dimer. Can form homodimer or heterodimer with HNF1-alpha. Interacts (via HNF-p1 domain) with PCBD1; the interaction increases its transactivation activity.

It is found in the nucleus. In terms of biological role, transcription factor that binds to the inverted palindrome 5'-GTTAATNATTAAC-3'. Binds to the FPC element in the cAMP regulatory unit of the PLAU gene. Transcriptional activity is increased by coactivator PCBD1. The polypeptide is Hepatocyte nuclear factor 1-beta (HNF1B) (Pongo abelii (Sumatran orangutan)).